Here is a 68-residue protein sequence, read N- to C-terminus: Large ribosomal subunit protein uL30 (68 aa).

Belongs to the universal ribosomal protein uL30 family. As to quaternary structure, part of the 50S ribosomal subunit.

The polypeptide is Large ribosomal subunit protein uL30 (Kocuria rhizophila (strain ATCC 9341 / DSM 348 / NBRC 103217 / DC2201)).